Reading from the N-terminus, the 51-residue chain is Large ribosomal subunit protein eL39 (51 aa).

Residues 1–15 show a composition bias toward basic residues; sequence MPSHKSFRTKQKLAK. The interval 1-21 is disordered; sequence MPSHKSFRTKQKLAKAARQNR.

Belongs to the eukaryotic ribosomal protein eL39 family. As to quaternary structure, component of the large ribosomal subunit (LSU). Mature yeast ribosomes consist of a small (40S) and a large (60S) subunit. The 40S small subunit contains 1 molecule of ribosomal RNA (18S rRNA) and at least 33 different proteins. The large 60S subunit contains 3 rRNA molecules (25S, 5.8S and 5S rRNA) and at least 46 different proteins. eL39 interacts with yih1.

Its subcellular location is the cytoplasm. Its function is as follows. Component of the ribosome, a large ribonucleoprotein complex responsible for the synthesis of proteins in the cell. The small ribosomal subunit (SSU) binds messenger RNAs (mRNAs) and translates the encoded message by selecting cognate aminoacyl-transfer RNA (tRNA) molecules. The large subunit (LSU) contains the ribosomal catalytic site termed the peptidyl transferase center (PTC), which catalyzes the formation of peptide bonds, thereby polymerizing the amino acids delivered by tRNAs into a polypeptide chain. The nascent polypeptides leave the ribosome through a tunnel in the LSU and interact with protein factors that function in enzymatic processing, targeting, and the membrane insertion of nascent chains at the exit of the ribosomal tunnel. The protein is Large ribosomal subunit protein eL39 (rpl39) of Schizosaccharomyces pombe (strain 972 / ATCC 24843) (Fission yeast).